Consider the following 330-residue polypeptide: Aspartate--ammonia ligase (330 aa).

It belongs to the class-II aminoacyl-tRNA synthetase family. AsnA subfamily.

The protein localises to the cytoplasm. It carries out the reaction L-aspartate + NH4(+) + ATP = L-asparagine + AMP + diphosphate + H(+). It participates in amino-acid biosynthesis; L-asparagine biosynthesis; L-asparagine from L-aspartate (ammonia route): step 1/1. The chain is Aspartate--ammonia ligase from Photorhabdus laumondii subsp. laumondii (strain DSM 15139 / CIP 105565 / TT01) (Photorhabdus luminescens subsp. laumondii).